Consider the following 128-residue polypeptide: Cytochrome c oxidase subunit 5B, mitochondrial (128 aa).

The transit peptide at 1 to 30 directs the protein to the mitochondrion; sequence MKRGSAALEVRELKMQTPTASCVLSTQRAN. 2 positions are modified to N6-acetyllysine: lysine 67 and lysine 85. The Zn(2+) site is built by cysteine 90, cysteine 92, cysteine 112, and cysteine 115. N6-acetyllysine is present on lysine 120.

It belongs to the cytochrome c oxidase 5b family. As to expression, expressed in testis. Not expressed in brain, heart, liver, kidney, spleen, lung, duodenum, muscle, epididymis, vagina, uterus and ovary.

It localises to the mitochondrion inner membrane. Functionally, this protein is one of the nuclear-coded polypeptide chains of cytochrome c oxidase, the terminal oxidase in mitochondrial electron transport. In Vulpes vulpes (Red fox), this protein is Cytochrome c oxidase subunit 5B, mitochondrial.